A 33-amino-acid chain; its full sequence is Rugosin-A (33 aa).

C27 and C33 are oxidised to a cystine.

Belongs to the frog skin active peptide (FSAP) family. Brevinin subfamily. In terms of tissue distribution, expressed by the skin glands.

The protein localises to the secreted. In terms of biological role, has antibacterial activity against Gram-positive bacteria. This Glandirana rugosa (Japanese wrinkled frog) protein is Rugosin-A.